Consider the following 596-residue polypeptide: Phosphoenolpyruvate carboxykinase [GTP] (596 aa).

Substrate contacts are provided by residues R77 and 205 to 207; that span reads YGG. Residues K214 and H234 each contribute to the Mn(2+) site. S256 provides a ligand contact to substrate. Position 257–262 (257–262) interacts with GTP; sequence ACGKTN. C258 is a catalytic residue. D283 serves as a coordination point for Mn(2+). The tract at residues 362 to 388 is disordered; that stretch reads KKGSTEKAAHPNSRFTAPAKNNPAISP. 373-375 contributes to the substrate binding site; sequence NSR. GTP-binding positions include R375, R406, and 499-502; that span reads YGDN.

It belongs to the phosphoenolpyruvate carboxykinase [GTP] family. As to quaternary structure, monomer. Requires Mn(2+) as cofactor.

Its subcellular location is the cytoplasm. The enzyme catalyses oxaloacetate + GTP = phosphoenolpyruvate + GDP + CO2. It participates in carbohydrate biosynthesis; gluconeogenesis. Catalyzes the conversion of oxaloacetate (OAA) to phosphoenolpyruvate (PEP), the rate-limiting step in the metabolic pathway that produces glucose from lactate and other precursors derived from the citric acid cycle. This Anaeromyxobacter sp. (strain K) protein is Phosphoenolpyruvate carboxykinase [GTP].